The following is a 382-amino-acid chain: Putative NADPH dehydrogenase C5H10.04 (382 aa).

The FMN site is built by Thr-28 and His-189. Residues His-189 and Asn-192 each contribute to the substrate site. FMN contacts are provided by Arg-242 and Arg-334. Substrate is bound at residue Tyr-361.

The protein belongs to the NADH:flavin oxidoreductase/NADH oxidase family. In terms of assembly, homodimer or heterodimer. It depends on FMN as a cofactor.

The enzyme catalyses A + NADPH + H(+) = AH2 + NADP(+). This chain is Putative NADPH dehydrogenase C5H10.04, found in Schizosaccharomyces pombe (strain 972 / ATCC 24843) (Fission yeast).